A 65-amino-acid polypeptide reads, in one-letter code: Large ribosomal subunit protein uL29 (65 aa).

This sequence belongs to the universal ribosomal protein uL29 family.

The sequence is that of Large ribosomal subunit protein uL29 (rpmC) from Xylella fastidiosa (strain 9a5c).